The sequence spans 118 residues: V-type proton ATPase subunit G 1 (118 aa).

Alanine 2 is modified (N-acetylalanine).

Belongs to the V-ATPase G subunit family. In terms of assembly, V-ATPase is a heteromultimeric enzyme made up of two complexes: the ATP-hydrolytic V1 complex and the proton translocation V0 complex. The V1 complex consists of three catalytic AB heterodimers that form a heterohexamer, three peripheral stalks each consisting of EG heterodimers, one central rotor including subunits D and F, and the regulatory subunits C and H. The proton translocation complex V0 consists of the proton transport subunit a, a ring of proteolipid subunits c9c'', rotary subunit d, subunits e and f, and the accessory subunits ATP6AP1/Ac45 and ATP6AP2/PRR. Kidney; localizes to early distal nephron, encompassing thick ascending limbs and distal convoluted tubules (at protein level). Ubiquitous.

The protein resides in the apical cell membrane. In terms of biological role, subunit of the V1 complex of vacuolar(H+)-ATPase (V-ATPase), a multisubunit enzyme composed of a peripheral complex (V1) that hydrolyzes ATP and a membrane integral complex (V0) that translocates protons. V-ATPase is responsible for acidifying and maintaining the pH of intracellular compartments and in some cell types, is targeted to the plasma membrane, where it is responsible for acidifying the extracellular environment. In aerobic conditions, involved in intracellular iron homeostasis, thus triggering the activity of Fe(2+) prolyl hydroxylase (PHD) enzymes, and leading to HIF1A hydroxylation and subsequent proteasomal degradation. The chain is V-type proton ATPase subunit G 1 (Atp6v1g1) from Mus musculus (Mouse).